Here is a 62-residue protein sequence, read N- to C-terminus: MSIINTISKLSLSNSLKSNITIGNLNGTTVNNYTHNETSSKFTEFFTKSYNKTKDGFEKLKN.

This is an uncharacterized protein from Dictyostelium discoideum (Social amoeba).